We begin with the raw amino-acid sequence, 89 residues long: Small ribosomal subunit protein uS15 (89 aa).

Belongs to the universal ribosomal protein uS15 family. As to quaternary structure, part of the 30S ribosomal subunit. Forms a bridge to the 50S subunit in the 70S ribosome, contacting the 23S rRNA.

One of the primary rRNA binding proteins, it binds directly to 16S rRNA where it helps nucleate assembly of the platform of the 30S subunit by binding and bridging several RNA helices of the 16S rRNA. Its function is as follows. Forms an intersubunit bridge (bridge B4) with the 23S rRNA of the 50S subunit in the ribosome. The sequence is that of Small ribosomal subunit protein uS15 from Neisseria gonorrhoeae (strain ATCC 700825 / FA 1090).